A 225-amino-acid polypeptide reads, in one-letter code: Methylthioribulose-1-phosphate dehydratase (225 aa).

Residues histidine 106 and histidine 108 each coordinate Zn(2+).

This sequence belongs to the aldolase class II family. MtnB subfamily. It depends on Zn(2+) as a cofactor.

It catalyses the reaction 5-(methylsulfanyl)-D-ribulose 1-phosphate = 5-methylsulfanyl-2,3-dioxopentyl phosphate + H2O. Its pathway is amino-acid biosynthesis; L-methionine biosynthesis via salvage pathway; L-methionine from S-methyl-5-thio-alpha-D-ribose 1-phosphate: step 2/6. Catalyzes the dehydration of methylthioribulose-1-phosphate (MTRu-1-P) into 2,3-diketo-5-methylthiopentyl-1-phosphate (DK-MTP-1-P). This chain is Methylthioribulose-1-phosphate dehydratase, found in Xanthomonas oryzae pv. oryzae (strain MAFF 311018).